An 843-amino-acid polypeptide reads, in one-letter code: Protein P (843 aa).

The interval 1 to 177 is terminal protein domain (TP); that stretch reads MPLSYQHFRK…FCGSPYSWEQ (177 aa). The spacer stretch occupies residues 178–346; sequence DLQHGRLVFQ…YCLCHIVNLI (169 aa). Residues 220 to 265 form a disordered region; sequence QSRLGPQPAQGQLAGRQQGGSGSIRARVHPSPWGTVGVEPSGSGPT. Residues 223 to 235 show a composition bias toward low complexity; sequence LGPQPAQGQLAGR. The interval 347-690 is polymerase/reverse transcriptase domain (RT); it reads EDWGPCTEHG…YLNLYPVARQ (344 aa). Residues 357–600 form the Reverse transcriptase domain; it reads EHLIRTPRTP…YSLNFMGYVI (244 aa). Mg(2+) contacts are provided by aspartate 429, aspartate 551, and aspartate 552.

Belongs to the hepadnaviridae P protein family.

The catalysed reaction is DNA(n) + a 2'-deoxyribonucleoside 5'-triphosphate = DNA(n+1) + diphosphate. It carries out the reaction Endonucleolytic cleavage to 5'-phosphomonoester.. Activated by host HSP70 and HSP40 in vitro to be able to bind the epsilon loop of the pgRNA. Because deletion of the RNase H region renders the protein partly chaperone-independent, the chaperones may be needed indirectly to relieve occlusion of the RNA-binding site by this domain. Inhibited by several reverse-transcriptase inhibitors: Lamivudine, Adefovir and Entecavir. In terms of biological role, multifunctional enzyme that converts the viral RNA genome into dsDNA in viral cytoplasmic capsids. This enzyme displays a DNA polymerase activity that can copy either DNA or RNA templates, and a ribonuclease H (RNase H) activity that cleaves the RNA strand of RNA-DNA heteroduplexes in a partially processive 3'- to 5'-endonucleasic mode. Neo-synthesized pregenomic RNA (pgRNA) are encapsidated together with the P protein, and reverse-transcribed inside the nucleocapsid. Initiation of reverse-transcription occurs first by binding the epsilon loop on the pgRNA genome, and is initiated by protein priming, thereby the 5'-end of (-)DNA is covalently linked to P protein. Partial (+)DNA is synthesized from the (-)DNA template and generates the relaxed circular DNA (RC-DNA) genome. After budding and infection, the RC-DNA migrates in the nucleus, and is converted into a plasmid-like covalently closed circular DNA (cccDNA). The activity of P protein does not seem to be necessary for cccDNA generation, and is presumably released from (+)DNA by host nuclear DNA repair machinery. The polypeptide is Protein P (Hepatitis B virus genotype B2 (isolate Vietnam/9873/1997) (HBV-B)).